The sequence spans 992 residues: ATP-dependent DNA helicase PIF7 (992 aa).

The N-terminal 21 residues, 1 to 21 (MWDGPLRSRQNLRTVAKLRSS), are a transit peptide targeting the mitochondrion. Disordered regions lie at residues 20-43 (SSGC…GETA), 145-182 (TVNK…TAAS), and 190-209 (LDSS…AVTQ). Polar residues-rich tracts occupy residues 23 to 43 (CPLT…GETA), 173 to 182 (NVDNTTTAAS), and 191 to 208 (DSSS…QAVT). 237 to 244 (GGAGTGKS) serves as a coordination point for ATP. A DNA-binding region spans residues 651–670 (QAYVALSRCTDVANLVIENF).

The protein belongs to the helicase family. PIF1 subfamily. As to quaternary structure, monomer. Requires Mg(2+) as cofactor.

The protein resides in the mitochondrion matrix. It localises to the kinetoplast. The enzyme catalyses Couples ATP hydrolysis with the unwinding of duplex DNA at the replication fork by translocating in the 5'-3' direction. This creates two antiparallel DNA single strands (ssDNA). The leading ssDNA polymer is the template for DNA polymerase III holoenzyme which synthesizes a continuous strand.. It carries out the reaction ATP + H2O = ADP + phosphate + H(+). Its function is as follows. DNA-dependent ATPase and 5'-3' DNA helicase required for the maintenance of mitochondrial (kinetoplast) genome stability. The chain is ATP-dependent DNA helicase PIF7 from Trypanosoma brucei brucei (strain 927/4 GUTat10.1).